Reading from the N-terminus, the 295-residue chain is Phosphonoacetaldehyde hydrolase (295 aa).

Aspartate 36 (nucleophile) is an active-site residue. Residues aspartate 36 and alanine 38 each contribute to the Mg(2+) site. Lysine 78 serves as the catalytic Schiff-base intermediate with substrate. Aspartate 212 lines the Mg(2+) pocket.

It belongs to the HAD-like hydrolase superfamily. PhnX family. As to quaternary structure, homodimer. Requires Mg(2+) as cofactor.

It carries out the reaction phosphonoacetaldehyde + H2O = acetaldehyde + phosphate + H(+). Involved in phosphonate degradation. In Psychromonas ingrahamii (strain DSM 17664 / CCUG 51855 / 37), this protein is Phosphonoacetaldehyde hydrolase.